We begin with the raw amino-acid sequence, 965 residues long: FKBP12-associated protein 1 (965 aa).

The RING-type; degenerate zinc finger occupies 68-118 (CMICTVEMDYTCQMFACKRCYRVFDYGCIREWALKSTEKTVDRIWKCPNCY). NF-X1-type zinc fingers lie at residues 159–177 (CMHGCSKICHLGPHPECTR), 216–235 (CSIHTCKKKCHPGLCGPCPE), 362–382 (CGKHSCPFTCHDKACMEPCLQ), 468–487 (CGIHKCQRKCHPGKCPPCLE), and 586–606 (CYHTCQKTCHLPGNCQKVCKQ). An R3H domain is found at 733–796 (ERWCSQIEAI…MRSVFIKKED (64 aa)). Threonine 951 carries the phosphothreonine modification. Serine 958 bears the Phosphoserine mark.

This sequence belongs to the NFX1 family. As to quaternary structure, interacts with FPR1.

It localises to the cytoplasm. It is found in the nucleus. May play a role in transcription regulation. The protein is FKBP12-associated protein 1 (FAP1) of Saccharomyces cerevisiae (strain ATCC 204508 / S288c) (Baker's yeast).